The following is a 60-amino-acid chain: Large ribosomal subunit protein uL30 (60 aa).

Belongs to the universal ribosomal protein uL30 family. In terms of assembly, part of the 50S ribosomal subunit.

The polypeptide is Large ribosomal subunit protein uL30 (Cupriavidus necator (strain ATCC 17699 / DSM 428 / KCTC 22496 / NCIMB 10442 / H16 / Stanier 337) (Ralstonia eutropha)).